Reading from the N-terminus, the 202-residue chain is MAKGDPKKPKGKMSAYAFFVQTCREEHKKKNPEVPVNFAEFSKKCSERWKTMSSKEKAKFDEMAKADKVRYDREMKDYGPAKGGKKKKDPNAPKRPPSGFFLFCSEFRPKIKSTNPGISIGDVAKKLGEMWNNLSDGEKQPYNNKAAKLKEKYEKDVADYKSKGKFDGAKGAATKAARKKVEEEDEEEEEDEEEEDEDDDDE.

2 consecutive DNA-binding regions (HMG box) follow at residues 9 to 79 (PKGK…KDYG) and 93 to 161 (PKRP…ADYK). Residues Cys23 and Cys45 each carry the cysteine sulfonic acid (-SO3H); alternate modification. Residues Cys23 and Cys45 are joined by a disulfide bond. The segment at 71–98 (YDREMKDYGPAKGGKKKKDPNAPKRPPS) is disordered. The residue at position 104 (Cys104) is a Cysteine sulfonic acid (-SO3H). The interval 161 to 202 (KSKGKFDGAKGAATKAARKKVEEEDEEEEEDEEEEDEDDDDE) is disordered. The segment covering 183-202 (EEDEEEEEDEEEEDEDDDDE) has biased composition (acidic residues).

This sequence belongs to the HMGB family. Post-translationally, reduction/oxidation of cysteine residues Cys-23, Cys-45 and Cys-104 and a possible intramolecular disulfide bond involving Cys-23 and Cys-45 give rise to different redox forms with specific functional activities in various cellular compartments: 1- fully reduced HMGB3 (HMGB3C23hC45hC104h), 2- disulfide HMGB3 (HMGB3C23-C45C104h) and 3- sulfonyl HMGB3 (HMGB3C23soC45soC104so).

Its subcellular location is the nucleus. The protein resides in the chromosome. It is found in the cytoplasm. Its function is as follows. Multifunctional protein with various roles in different cellular compartments. May act in a redox sensitive manner. Associates with chromatin and binds DNA with a preference for non-canonical DNA structures such as single-stranded DNA. Can bend DNA and enhance DNA flexibility by looping thus providing a mechanism to promote activities on various gene promoters. Binds to the delta-1 crystallin/ASL1 enhancer. Proposed to be involved in the innate immune response to nucleic acids by acting as a cytoplasmic promiscuous immunogenic DNA/RNA sensor. In Gallus gallus (Chicken), this protein is High mobility group protein B3 (HMGB3).